The following is a 332-amino-acid chain: Aspartate carbamoyltransferase catalytic subunit (332 aa).

Positions 78 and 79 each coordinate carbamoyl phosphate. Lys106 contributes to the L-aspartate binding site. Residues Arg128, His156, and Gln159 each contribute to the carbamoyl phosphate site. L-aspartate contacts are provided by Arg189 and Arg243. The carbamoyl phosphate site is built by Gly284 and Pro285.

The protein belongs to the aspartate/ornithine carbamoyltransferase superfamily. ATCase family. In terms of assembly, heterododecamer (2C3:3R2) of six catalytic PyrB chains organized as two trimers (C3), and six regulatory PyrI chains organized as three dimers (R2).

The catalysed reaction is carbamoyl phosphate + L-aspartate = N-carbamoyl-L-aspartate + phosphate + H(+). The protein operates within pyrimidine metabolism; UMP biosynthesis via de novo pathway; (S)-dihydroorotate from bicarbonate: step 2/3. Functionally, catalyzes the condensation of carbamoyl phosphate and aspartate to form carbamoyl aspartate and inorganic phosphate, the committed step in the de novo pyrimidine nucleotide biosynthesis pathway. In Caulobacter vibrioides (strain ATCC 19089 / CIP 103742 / CB 15) (Caulobacter crescentus), this protein is Aspartate carbamoyltransferase catalytic subunit.